Reading from the N-terminus, the 249-residue chain is Proteasome activator complex subunit 1 (249 aa).

Positions 59 to 102 are disordered; sequence APLDIPVPDPVKEKEKEERKKQQEKEEKEEKKKGDEDDKGPPCG. Positions 68–98 are enriched in basic and acidic residues; sequence PVKEKEKEERKKQQEKEEKEEKKKGDEDDKG.

It belongs to the PA28 family. In terms of assembly, heterodimer of PSME1 and PSME2, which forms a hexameric ring. PSME1 can form homoheptamers.

Its function is as follows. Implicated in immunoproteasome assembly and required for efficient antigen processing. The PA28 activator complex enhances the generation of class I binding peptides by altering the cleavage pattern of the proteasome. In Mus musculus (Mouse), this protein is Proteasome activator complex subunit 1 (Psme1).